Reading from the N-terminus, the 248-residue chain is 5'-nucleotidase SurE (248 aa).

4 residues coordinate a divalent metal cation: D8, D9, S39, and N91.

Belongs to the SurE nucleotidase family. It depends on a divalent metal cation as a cofactor.

It is found in the cytoplasm. It carries out the reaction a ribonucleoside 5'-phosphate + H2O = a ribonucleoside + phosphate. Functionally, nucleotidase that shows phosphatase activity on nucleoside 5'-monophosphates. This chain is 5'-nucleotidase SurE, found in Neisseria meningitidis serogroup C (strain 053442).